The following is a 158-amino-acid chain: NAD(P)H-quinone oxidoreductase subunit N (158 aa).

Belongs to the complex I NdhN subunit family. In terms of assembly, NDH-1 can be composed of about 15 different subunits; different subcomplexes with different compositions have been identified which probably have different functions.

It localises to the cellular thylakoid membrane. The enzyme catalyses a plastoquinone + NADH + (n+1) H(+)(in) = a plastoquinol + NAD(+) + n H(+)(out). It carries out the reaction a plastoquinone + NADPH + (n+1) H(+)(in) = a plastoquinol + NADP(+) + n H(+)(out). Its function is as follows. NDH-1 shuttles electrons from an unknown electron donor, via FMN and iron-sulfur (Fe-S) centers, to quinones in the respiratory and/or the photosynthetic chain. The immediate electron acceptor for the enzyme in this species is believed to be plastoquinone. Couples the redox reaction to proton translocation, and thus conserves the redox energy in a proton gradient. Cyanobacterial NDH-1 also plays a role in inorganic carbon-concentration. This Crocosphaera subtropica (strain ATCC 51142 / BH68) (Cyanothece sp. (strain ATCC 51142)) protein is NAD(P)H-quinone oxidoreductase subunit N.